Reading from the N-terminus, the 358-residue chain is DNA polymerase IV (358 aa).

A UmuC domain is found at 4–185 (IIHIDMDCYF…LSLRKIPGVG (182 aa)). Positions 8 and 103 each coordinate Mg(2+). The active site involves glutamate 104.

Belongs to the DNA polymerase type-Y family. Monomer. Mg(2+) serves as cofactor.

The protein localises to the cytoplasm. The catalysed reaction is DNA(n) + a 2'-deoxyribonucleoside 5'-triphosphate = DNA(n+1) + diphosphate. Functionally, poorly processive, error-prone DNA polymerase involved in untargeted mutagenesis. Copies undamaged DNA at stalled replication forks, which arise in vivo from mismatched or misaligned primer ends. These misaligned primers can be extended by PolIV. Exhibits no 3'-5' exonuclease (proofreading) activity. May be involved in translesional synthesis, in conjunction with the beta clamp from PolIII. In Shewanella baltica (strain OS195), this protein is DNA polymerase IV.